Consider the following 29-residue polypeptide: Brevinin-2Rc (29 aa).

C23 and C29 are joined by a disulfide.

As to expression, expressed by the skin glands.

The protein resides in the secreted. Antimicrobial peptide. The chain is Brevinin-2Rc from Pelophylax ridibundus (Marsh frog).